Consider the following 147-residue polypeptide: MRTTPLAKTSDIKRKWYVIDATDVSLGRLSTAVASILRGKNKPQYTPNVDTGDYVIVVNAAKLKLTGKKATDKIYYRHSDYRGGLRATPAGELLAKNPVRLVELSVKGMLPKNTLGHQEFMKMHVYAGEDHEHAAQKPEKLDINELI.

It belongs to the universal ribosomal protein uL13 family. As to quaternary structure, part of the 50S ribosomal subunit.

This protein is one of the early assembly proteins of the 50S ribosomal subunit, although it is not seen to bind rRNA by itself. It is important during the early stages of 50S assembly. This Lactobacillus johnsonii (strain CNCM I-12250 / La1 / NCC 533) protein is Large ribosomal subunit protein uL13.